Reading from the N-terminus, the 166-residue chain is Large ribosomal subunit protein uL10 (166 aa).

The protein belongs to the universal ribosomal protein uL10 family. Part of the ribosomal stalk of the 50S ribosomal subunit. The N-terminus interacts with L11 and the large rRNA to form the base of the stalk. The C-terminus forms an elongated spine to which L12 dimers bind in a sequential fashion forming a multimeric L10(L12)X complex.

Functionally, forms part of the ribosomal stalk, playing a central role in the interaction of the ribosome with GTP-bound translation factors. The chain is Large ribosomal subunit protein uL10 (rplJ) from Streptococcus pyogenes serotype M1.